A 146-amino-acid chain; its full sequence is Ecotin-like protein 1 (146 aa).

It belongs to the protease inhibitor I11 (ecotin) family.

In Leishmania braziliensis, this protein is Ecotin-like protein 1 (ISP1).